The sequence spans 609 residues: MALPVLSEGAISAILGGDSSCKPTLQVINIRSINTGNGPPRYRLLMSDGLNTLSSFMLATQLNFLVDNNLLATNCICQVSRFIVNNLKDGRRVIIVMEMEVLKSADLVKGKIGNPHPYNDGQGPPQPAAPAPASAPPPSKPQNISAPPPPSMNRGASKLFGGGSVVNTPGGSQSKVVPIASLNPYQSKWTVRARVTNKGQIRTWSNSRGEGKLFSIEMVDESGEIRATAFNEQADKFFSLIEVNKVYYFSKGTLKIANKQYTSVKNDYEMTFNSETSVIPCDDSADVPMVQFEFVPIGELESKNKDTVLDIIGICKNAEEVTKVTIRSNNREVSKRNINLMDSSGKVVSTTLWGEDADKFDGSRQPVVAIKGARLSDFGGRSLSVLSSSTVMINPDIPEAFKLRAWFDSEGQVVEGTSISESRGGTGGGNTNWKSLLEVKTENLGHGEKADYFTSVATIVYLRKENCLYQACPSQDCNKKVIDQQNGLFRCEKCDKEFPNYKYRLILSANIADFGENQWITCFQESAESILGQNATYLGELKEKNEQAYDEVFQNANFRSYTFRIRVKLETYNDESRIKATAMDVKPVDHKEYSRRLIMNIRKMAAQGV.

Residues 112-164 form a disordered region; sequence IGNPHPYNDGQGPPQPAAPAPASAPPPSKPQNISAPPPPSMNRGASKLFGGGS. Over residues 124–151 the composition is skewed to pro residues; sequence PPQPAAPAPASAPPPSKPQNISAPPPPS. Residues 189-273 constitute a DNA-binding region (OB); the sequence is WTVRARVTNK…VKNDYEMTFN (85 aa). Residues 472–494 form a C4-type zinc finger; the sequence is CPSQDCNKKVIDQQNGLFRCEKC.

It belongs to the replication factor A protein 1 family. In terms of assembly, component of the heterotrimeric canonical replication protein A complex (RPA). Interacts with rpain-a.

Its subcellular location is the nucleus. It is found in the PML body. In terms of biological role, as part of the heterotrimeric replication protein A complex (RPA/RP-A), binds and stabilizes single-stranded DNA intermediates, that form during DNA replication or upon DNA stress. It prevents their reannealing and in parallel, recruits and activates different proteins and complexes involved in DNA metabolism. Thereby, it plays an essential role both in DNA replication and the cellular response to DNA damage. This is Replication protein A 70 kDa DNA-binding subunit (rpa1) from Xenopus tropicalis (Western clawed frog).